The following is a 113-amino-acid chain: Nucleoid-associated protein sync_0026 (113 aa).

It belongs to the YbaB/EbfC family. In terms of assembly, homodimer.

It is found in the cytoplasm. The protein resides in the nucleoid. Its function is as follows. Binds to DNA and alters its conformation. May be involved in regulation of gene expression, nucleoid organization and DNA protection. This chain is Nucleoid-associated protein sync_0026, found in Synechococcus sp. (strain CC9311).